We begin with the raw amino-acid sequence, 381 residues long: Cytosolic acyl coenzyme A thioester hydrolase (381 aa).

Residues 51-169 (LGHCVTMGRI…TLWYVPLSLK (119 aa)) form the HotDog ACOT-type 1 domain. Asn-67 is a catalytic residue. Residues Lys-169 and Lys-199 each carry the N6-acetyllysine modification. The HotDog ACOT-type 2 domain maps to 225-339 (SYSQSSLIHL…FFTYVSLNQE (115 aa)). Asp-256 is a catalytic residue. Lys-284 is subject to N6-acetyllysine. Residues 342-381 (PMPVPQLVPETEDEKKRFEEGKGRYLQMKAKRQGHTEPQP) form a disordered region. Basic and acidic residues predominate over residues 354–364 (DEKKRFEEGKG).

As to quaternary structure, homohexamer. In terms of tissue distribution, widely expressed with highest levels in brain. High levels also found in thymus, large intestine and testis. Negligible in muscle and adipose tissue. In the central and peripheral nervous systems, displays a predominantly neuronal localization with highest expression in cell bodies and neurites.

Its subcellular location is the cytoplasm. The protein resides in the cytosol. The enzyme catalyses hexadecanoyl-CoA + H2O = hexadecanoate + CoA + H(+). It catalyses the reaction dodecanoyl-CoA + H2O = dodecanoate + CoA + H(+). It carries out the reaction tetradecanoyl-CoA + H2O = tetradecanoate + CoA + H(+). The catalysed reaction is decanoyl-CoA + H2O = decanoate + CoA + H(+). The enzyme catalyses octanoyl-CoA + H2O = octanoate + CoA + H(+). It catalyses the reaction octadecanoyl-CoA + H2O = octadecanoate + CoA + H(+). It carries out the reaction (9Z)-octadecenoyl-CoA + H2O = (9Z)-octadecenoate + CoA + H(+). It functions in the pathway lipid metabolism; fatty acid metabolism. Functionally, catalyzes the hydrolysis of acyl-CoAs into free fatty acids and coenzyme A (CoASH), regulating their respective intracellular levels. Preferentially hydrolyzes palmitoyl-CoA, but has a broad specificity acting on other fatty acyl-CoAs with chain-lengths of C8-C18. May play an important physiological function in brain. This chain is Cytosolic acyl coenzyme A thioester hydrolase (Acot7), found in Mus musculus (Mouse).